A 416-amino-acid polypeptide reads, in one-letter code: Lipase A (416 aa).

An N-terminal signal peptide occupies residues 1–32 (MRLAPQKPLLLSTVLHLLLSIWMLGFASLAGA). Disulfide bonds link C67/C391 and C177/C180. N179 carries N-linked (GlcNAc...) asparagine glycosylation. S219 (nucleophile) is an active-site residue. Active-site charge relay system residues include D287 and H381.

The protein belongs to the AB hydrolase superfamily. Lipase family. In terms of processing, glycosylated.

The protein resides in the secreted. The catalysed reaction is Deacetylation of xylans and xylo-oligosaccharides.. It catalyses the reaction a triacylglycerol + H2O = a diacylglycerol + a fatty acid + H(+). Lipolytic enzyme that possesses both lipase and acetylxylan esterase activity. Active towards p-nitrophenol esters of various carbon chain length with preference for medium-chain fatty acids (C-8). Also highly active on the acetylated compounds xylose tetra-acetate and oat spelt xylan. The sequence is that of Lipase A from Sodiomyces alcalophilus (Acremonium alcalophilum).